The sequence spans 136 residues: Large ribosomal subunit protein uL16 (136 aa).

Belongs to the universal ribosomal protein uL16 family. As to quaternary structure, part of the 50S ribosomal subunit.

Its function is as follows. Binds 23S rRNA and is also seen to make contacts with the A and possibly P site tRNAs. This chain is Large ribosomal subunit protein uL16, found in Mannheimia succiniciproducens (strain KCTC 0769BP / MBEL55E).